The chain runs to 982 residues: NACHT, LRR and PYD domains-containing protein 4C (982 aa).

One can recognise a Pyrin domain in the interval 1 to 93; it reads MASFFSDFGL…MERAGREIAG (93 aa). Residues 148 to 471 enclose the NACHT domain; it reads HMVFLQGAAG…FYLLKSHMDH (324 aa). 154 to 161 provides a ligand contact to ATP; the sequence is GAAGIGKS. 7 LRR repeats span residues 594–617, 689–716, 746–773, 802–825, 827–844, 859–882, and 916–940; these read CSTL…HSYT, NQCL…VLSQ, SKML…LCHP, NKTL…VLCG, LSLP…YCLI, NQNL…LLCD, and CKTL…LFEA.

It belongs to the NLRP family.

Its function is as follows. May be involved in inflammation and recognition of cytosolic pathogen-associated molecular patterns (PAMPs) not intercepted by membrane-bound receptors. This Mus musculus (Mouse) protein is NACHT, LRR and PYD domains-containing protein 4C (Nlrp4c).